A 604-amino-acid polypeptide reads, in one-letter code: Kelch-like protein 15 (604 aa).

The region spanning 31–98 is the BTB domain; sequence LDVTLVIEDH…MYYGTIELSM (68 aa). Positions 133-237 constitute a BACK domain; that stretch reads CAEIMRLLDD…TPSSVFEKVK (105 aa). Kelch repeat units lie at residues 328–379, 381–426, 428–473, 489–542, and 544–590; these read FVFL…VIGK, IYAV…VLNN, LFIT…NKSK, KLYV…VLDK, and IMVL…VCNL.

As to quaternary structure, homodimer. Dimerization does not affect PPP2R5B-binding, but is required for its proteasomal degradation. Interacts with CUL3. Directly interacts with PPP2R5B; this interaction leads to PPP2R5B proteasomal degradation. Interacts with RBBP8/CtIP; this interaction leads to RBBP8 proteasomal degradation. Interacts with PACMP micropeptide; interaction prevents ubiquitination and degradation of RBBP8/CtIP.

The protein resides in the nucleus. It functions in the pathway protein modification; protein ubiquitination. In terms of biological role, substrate-specific adapter for CUL3 E3 ubiquitin-protein ligase complex. Acts as an adapter for CUL3 to target the serine/threonine-protein phosphatase 2A (PP2A) subunit PPP2R5B for ubiquitination and subsequent proteasomal degradation, thus promoting exchange with other regulatory subunits and regulating PP2A holoenzyme composition. Acts as an adapter for CUL3 to target the DNA-end resection factor RBBP8/CtIP for ubiquitination and subsequent proteasomal degradation. Through the regulation of RBBP8/CtIP protein turnover, plays a key role in DNA damage response, favoring DNA double-strand repair through error-prone non-homologous end joining (NHEJ) over error-free, RBBP8-mediated homologous recombination (HR). The sequence is that of Kelch-like protein 15 (Klhl15) from Mus musculus (Mouse).